The chain runs to 227 residues: Uracil-DNA glycosylase (227 aa).

The active-site Proton acceptor is Asp64.

The protein belongs to the uracil-DNA glycosylase (UDG) superfamily. UNG family.

It localises to the cytoplasm. The catalysed reaction is Hydrolyzes single-stranded DNA or mismatched double-stranded DNA and polynucleotides, releasing free uracil.. In terms of biological role, excises uracil residues from the DNA which can arise as a result of misincorporation of dUMP residues by DNA polymerase or due to deamination of cytosine. This chain is Uracil-DNA glycosylase, found in Erwinia tasmaniensis (strain DSM 17950 / CFBP 7177 / CIP 109463 / NCPPB 4357 / Et1/99).